Reading from the N-terminus, the 384-residue chain is Dual specificity protein phosphatase 5 (384 aa).

Residues 19 to 141 (AEARCVVLDC…FYSQYPECCV (123 aa)) form the Rhodanese domain. The Nuclear localization signal motif lies at 53–74 (RRARGGAVSARYVLADEAARAR). In terms of domain architecture, Tyrosine-protein phosphatase spans 178–319 (GPVEILPFLY…LLQYESEILP (142 aa)). Cys263 acts as the Phosphocysteine intermediate in catalysis.

It belongs to the protein-tyrosine phosphatase family. Non-receptor class dual specificity subfamily.

The protein localises to the nucleus. It catalyses the reaction O-phospho-L-tyrosyl-[protein] + H2O = L-tyrosyl-[protein] + phosphate. The catalysed reaction is O-phospho-L-seryl-[protein] + H2O = L-seryl-[protein] + phosphate. The enzyme catalyses O-phospho-L-threonyl-[protein] + H2O = L-threonyl-[protein] + phosphate. Its function is as follows. Dual specificity protein phosphatase; active with phosphotyrosine, phosphoserine and phosphothreonine residues. The highest relative activity is toward ERK1. In Rattus norvegicus (Rat), this protein is Dual specificity protein phosphatase 5 (Dusp5).